A 358-amino-acid polypeptide reads, in one-letter code: tRNA-specific 2-thiouridylase MnmA (358 aa).

Residues Ala6–Ser13 and Leu32 contribute to the ATP site. Cys101 (nucleophile) is an active-site residue. A disulfide bond links Cys101 and Cys193. Gly125 is a binding site for ATP. The tract at residues Lys143–Gln145 is interaction with tRNA. Cys193 (cysteine persulfide intermediate) is an active-site residue.

The protein belongs to the MnmA/TRMU family.

The protein localises to the cytoplasm. The enzyme catalyses S-sulfanyl-L-cysteinyl-[protein] + uridine(34) in tRNA + AH2 + ATP = 2-thiouridine(34) in tRNA + L-cysteinyl-[protein] + A + AMP + diphosphate + H(+). Functionally, catalyzes the 2-thiolation of uridine at the wobble position (U34) of tRNA, leading to the formation of s(2)U34. The chain is tRNA-specific 2-thiouridylase MnmA from Mycobacterium avium (strain 104).